Consider the following 269-residue polypeptide: MTLNERIAELRERVRQQRPLIHHITNFVVMNDTANVTLHIGGLPVMAHDRAEVAEMVTAAGALVLNVGTLSPDWIEAMLIAGRRANELGIPIVLDPVGAGATSLRTASNRRLLEELQIAVVRGNSGEIGALAGMGGVVKGVETVVEVDDPTAAAKALAQQYRTVVAVTGRQDVVTDGKRVFLVDNGHEWLKTLTGTGCSATTVIAAFAAVEREYPFAAAAALACFGLAAELAAPAARGPASFKVAFYDAIYHLSADQIRAGARVTAVAG.

Met46 is a binding site for substrate. Arg122 and Thr168 together coordinate ATP. Gly195 contacts substrate.

This sequence belongs to the Thz kinase family. Mg(2+) is required as a cofactor.

The catalysed reaction is 5-(2-hydroxyethyl)-4-methylthiazole + ATP = 4-methyl-5-(2-phosphooxyethyl)-thiazole + ADP + H(+). The protein operates within cofactor biosynthesis; thiamine diphosphate biosynthesis; 4-methyl-5-(2-phosphoethyl)-thiazole from 5-(2-hydroxyethyl)-4-methylthiazole: step 1/1. Its function is as follows. Catalyzes the phosphorylation of the hydroxyl group of 4-methyl-5-beta-hydroxyethylthiazole (THZ). The polypeptide is Hydroxyethylthiazole kinase (Chloroflexus aurantiacus (strain ATCC 29366 / DSM 635 / J-10-fl)).